Consider the following 257-residue polypeptide: Phycoerythrobilin:ferredoxin oxidoreductase (257 aa).

The protein belongs to the HY2 family.

The enzyme catalyses (3Z)-phycoerythrobilin + oxidized 2[4Fe-4S]-[ferredoxin] = 15,16-dihydrobiliverdin + reduced 2[4Fe-4S]-[ferredoxin] + 2 H(+). Catalyzes the two-electron reduction of the C2 and C3(1) diene system of 15,16-dihydrobiliverdin. This chain is Phycoerythrobilin:ferredoxin oxidoreductase (pebB), found in Synechococcus sp. (strain WH8020).